Reading from the N-terminus, the 70-residue chain is MTYTQASGYSQGYAGSTSYFGGMDCGSYLTPMHHQLPGPGATLSPMGTNAVTSHLNQSPASLSTQGYGAS.

The disordered stretch occupies residues 34–70 (HQLPGPGATLSPMGTNAVTSHLNQSPASLSTQGYGAS). Residues 45–70 (PMGTNAVTSHLNQSPASLSTQGYGAS) are compositionally biased toward polar residues.

Belongs to the paired homeobox family. Bicoid subfamily.

The protein localises to the nucleus. In terms of biological role, transcription factor probably involved in the development of the brain and the sense organs. Can bind to the bicoid/BCD target sequence (BTS): 5'-TCTAATCCC-3'. The sequence is that of Homeobox protein OTX2 (Otx2) from Rattus norvegicus (Rat).